Reading from the N-terminus, the 197-residue chain is 3-isopropylmalate dehydratase small subunit (197 aa).

This sequence belongs to the LeuD family. LeuD type 1 subfamily. Heterodimer of LeuC and LeuD.

The enzyme catalyses (2R,3S)-3-isopropylmalate = (2S)-2-isopropylmalate. The protein operates within amino-acid biosynthesis; L-leucine biosynthesis; L-leucine from 3-methyl-2-oxobutanoate: step 2/4. Catalyzes the isomerization between 2-isopropylmalate and 3-isopropylmalate, via the formation of 2-isopropylmaleate. This is 3-isopropylmalate dehydratase small subunit from Acidothermus cellulolyticus (strain ATCC 43068 / DSM 8971 / 11B).